We begin with the raw amino-acid sequence, 479 residues long: Cysteine--tRNA ligase (479 aa).

C28 provides a ligand contact to Zn(2+). The short motif at 30–40 is the 'HIGH' region element; that stretch reads PTVYDHAHLGH. Positions 207, 232, and 236 each coordinate Zn(2+). Positions 264–268 match the 'KMSKS' region motif; it reads KMSKS. K267 serves as a coordination point for ATP.

This sequence belongs to the class-I aminoacyl-tRNA synthetase family. It depends on Zn(2+) as a cofactor.

The protein localises to the cytoplasm. The enzyme catalyses tRNA(Cys) + L-cysteine + ATP = L-cysteinyl-tRNA(Cys) + AMP + diphosphate. This is Cysteine--tRNA ligase from Methanococcus aeolicus (strain ATCC BAA-1280 / DSM 17508 / OCM 812 / Nankai-3).